We begin with the raw amino-acid sequence, 100 residues long: UPF0473 protein Lm4b_01511 (100 aa).

It belongs to the UPF0473 family.

This Listeria monocytogenes serotype 4b (strain CLIP80459) protein is UPF0473 protein Lm4b_01511.